The following is a 125-amino-acid chain: Large ribosomal subunit protein bL12 (125 aa).

Belongs to the bacterial ribosomal protein bL12 family. In terms of assembly, homodimer. Part of the ribosomal stalk of the 50S ribosomal subunit. Forms a multimeric L10(L12)X complex, where L10 forms an elongated spine to which 2 to 4 L12 dimers bind in a sequential fashion. Binds GTP-bound translation factors.

In terms of biological role, forms part of the ribosomal stalk which helps the ribosome interact with GTP-bound translation factors. Is thus essential for accurate translation. This Azoarcus sp. (strain BH72) protein is Large ribosomal subunit protein bL12.